Here is a 440-residue protein sequence, read N- to C-terminus: MEQPQEETPEAREEEKEEVAMGDGAPELNGGPEHTLPSSSCADLSQNSSPSSLLDQLQMGCDGASGGSLNMECRVCGDKASGFHYGVHACEGCKGFFRRTIRMKLEYEKCDRICKIQKKNRNKCQYCRFQKCLALGMSHNAIRFGRMPEAEKRKLVAGLTASEGCQHNPQLADLKAFSKHIYNAYLKNFNMTKKKARSILTGKSSHNAPFVIHDIETLWQAEKGLVWKQLVNGLPPYNEISVHVFYRCQSTTVETVRELTEFAKNIPNFSSLFLNDQVTLLKYGVHEAIFAMLASIVNKDGLLVANGSGFVTHEFLRSLRKPFSDIIEPKFEFAVKFNALELDDSDLALFIAAIILCGDRPGLMNVPQVEAIQDTILRALEFHLQVNHPDSQYLFPKLLQKMADLRQLVTEHAQMMQWLKKTESETLLHPLLQEIYKDMY.

The disordered stretch occupies residues 1–53; sequence MEQPQEETPEAREEEKEEVAMGDGAPELNGGPEHTLPSSSCADLSQNSSPSSL. Residues 36–53 are compositionally biased toward polar residues; the sequence is LPSSSCADLSQNSSPSSL. Residues 70 to 144 constitute a DNA-binding region (nuclear receptor); it reads NMECRVCGDK…LGMSHNAIRF (75 aa). 2 consecutive NR C4-type zinc fingers follow at residues 73–93 and 110–132; these read CRVC…CEGC and CDRI…FQKC. Positions 210-438 constitute an NR LBD domain; that stretch reads FVIHDIETLW…HPLLQEIYKD (229 aa).

It belongs to the nuclear hormone receptor family. NR1 subfamily. Heterodimer with the retinoid X receptor. Interacts (via domain NR LBD) with CRY1 and CRY2 in a ligand-dependent manner. 'Lys-48'-linked polyubiquitinated; leading to proteasomal degradation. Deubiquitinated and stabilized by OTUD3. In terms of tissue distribution, heart, adrenal and intestine.

It is found in the nucleus. Ligand-activated transcription factor key mediator of energy metabolism in adipose tissues. Receptor that binds peroxisome proliferators such as hypolipidemic drugs and fatty acids. Has a preference for poly-unsaturated fatty acids, such as gamma-linoleic acid and eicosapentanoic acid. Once activated by a ligand, the receptor binds to promoter elements of target genes. Regulates the peroxisomal beta-oxidation pathway of fatty acids. Functions as transcription activator for the acyl-CoA oxidase gene. Decreases expression of NPC1L1 once activated by a ligand. The chain is Peroxisome proliferator-activated receptor delta (Ppard) from Mus musculus (Mouse).